The following is a 431-amino-acid chain: Glutamate-1-semialdehyde 2,1-aminomutase (431 aa).

Position 269 is an N6-(pyridoxal phosphate)lysine (K269).

Belongs to the class-III pyridoxal-phosphate-dependent aminotransferase family. HemL subfamily. In terms of assembly, homodimer. Pyridoxal 5'-phosphate serves as cofactor.

Its subcellular location is the cytoplasm. The enzyme catalyses (S)-4-amino-5-oxopentanoate = 5-aminolevulinate. The protein operates within porphyrin-containing compound metabolism; protoporphyrin-IX biosynthesis; 5-aminolevulinate from L-glutamyl-tRNA(Glu): step 2/2. Its pathway is porphyrin-containing compound metabolism; chlorophyll biosynthesis. The chain is Glutamate-1-semialdehyde 2,1-aminomutase from Chlorobium phaeovibrioides (strain DSM 265 / 1930) (Prosthecochloris vibrioformis (strain DSM 265)).